The chain runs to 459 residues: tRNA modification GTPase MnmE (459 aa).

Residues Arg-20, Glu-85, and Arg-124 each contribute to the (6S)-5-formyl-5,6,7,8-tetrahydrofolate site. Residues 221–380 (GISTVIIGRP…LEEAIQSLFF (160 aa)) enclose the TrmE-type G domain. Asn-231 is a K(+) binding site. GTP contacts are provided by residues 231–236 (NVGKSS), 250–256 (TDIPGTT), and 275–278 (DTAG). Mg(2+) is bound at residue Ser-235. The K(+) site is built by Thr-250, Ile-252, and Thr-255. Thr-256 provides a ligand contact to Mg(2+). A (6S)-5-formyl-5,6,7,8-tetrahydrofolate-binding site is contributed by Lys-459.

Belongs to the TRAFAC class TrmE-Era-EngA-EngB-Septin-like GTPase superfamily. TrmE GTPase family. In terms of assembly, homodimer. Heterotetramer of two MnmE and two MnmG subunits. K(+) serves as cofactor.

It is found in the cytoplasm. Exhibits a very high intrinsic GTPase hydrolysis rate. Involved in the addition of a carboxymethylaminomethyl (cmnm) group at the wobble position (U34) of certain tRNAs, forming tRNA-cmnm(5)s(2)U34. This chain is tRNA modification GTPase MnmE, found in Bacillus licheniformis (strain ATCC 14580 / DSM 13 / JCM 2505 / CCUG 7422 / NBRC 12200 / NCIMB 9375 / NCTC 10341 / NRRL NRS-1264 / Gibson 46).